The chain runs to 65 residues: 7 kDa A-type inclusion protein (65 aa).

Residues 1 to 20 (MSNQNIPQLSEYQTSVSQVA) show a composition bias toward polar residues. A disordered region spans residues 1 to 31 (MSNQNIPQLSEYQTSVSQVAVTPPPKPETPQ).

This is 7 kDa A-type inclusion protein from Vaccinia virus (strain Copenhagen) (VACV).